Reading from the N-terminus, the 449-residue chain is Exodeoxyribonuclease 7 large subunit (449 aa).

It belongs to the XseA family. Heterooligomer composed of large and small subunits.

It localises to the cytoplasm. It carries out the reaction Exonucleolytic cleavage in either 5'- to 3'- or 3'- to 5'-direction to yield nucleoside 5'-phosphates.. Its function is as follows. Bidirectionally degrades single-stranded DNA into large acid-insoluble oligonucleotides, which are then degraded further into small acid-soluble oligonucleotides. This chain is Exodeoxyribonuclease 7 large subunit, found in Salmonella paratyphi A (strain ATCC 9150 / SARB42).